Consider the following 400-residue polypeptide: MSETVQKQGRVVEIDSHAINFGPQHPAAHGVLRLVLELDGEVVERADPHIGLLHRGTEKLIEYKSYLQALPYFDRLDYVSPMCEEHAFALATEKLLGITAPERAQWIRTMFAEITRILNHLLNLTTYALDGGAMTPVLWGHEEREKLLEFHEAVSGARFHANYFRPGGVAKDLPAGLTDRIADWTEKFPAFIDDMAGLLSDNRIWKQRVVDIGRMTPEQALAWGFSGPCIRASGIPWDLRKSQPYDKYADVDFEVPVGRNGDCYDRYLVRVEEMRQSVRIVKQCLGKIRPGPIKVQDHKITPPPRAEMKRSMEALIHHFKLYTEGYHVPEGATYTAVESPKGEFGVYLVSDGSNRPYRCKIRPTGFAHLQAIDVMAHRHMLADAVVIIGSLDLVFGEVDR.

This sequence belongs to the complex I 49 kDa subunit family. As to quaternary structure, NDH-1 is composed of 14 different subunits. Subunits NuoB, C, D, E, F, and G constitute the peripheral sector of the complex.

It localises to the cell inner membrane. The enzyme catalyses a quinone + NADH + 5 H(+)(in) = a quinol + NAD(+) + 4 H(+)(out). Functionally, NDH-1 shuttles electrons from NADH, via FMN and iron-sulfur (Fe-S) centers, to quinones in the respiratory chain. The immediate electron acceptor for the enzyme in this species is believed to be ubiquinone. Couples the redox reaction to proton translocation (for every two electrons transferred, four hydrogen ions are translocated across the cytoplasmic membrane), and thus conserves the redox energy in a proton gradient. This chain is NADH-quinone oxidoreductase subunit D, found in Granulibacter bethesdensis (strain ATCC BAA-1260 / CGDNIH1).